A 280-amino-acid chain; its full sequence is Tryptophan synthase alpha chain (280 aa).

Residues Glu-50 and Asp-61 each act as proton acceptor in the active site.

The protein belongs to the TrpA family. As to quaternary structure, tetramer of two alpha and two beta chains.

It catalyses the reaction (1S,2R)-1-C-(indol-3-yl)glycerol 3-phosphate + L-serine = D-glyceraldehyde 3-phosphate + L-tryptophan + H2O. It functions in the pathway amino-acid biosynthesis; L-tryptophan biosynthesis; L-tryptophan from chorismate: step 5/5. The alpha subunit is responsible for the aldol cleavage of indoleglycerol phosphate to indole and glyceraldehyde 3-phosphate. This Methylorubrum extorquens (strain CM4 / NCIMB 13688) (Methylobacterium extorquens) protein is Tryptophan synthase alpha chain.